The primary structure comprises 621 residues: DnaJ homolog subfamily C member 2 (621 aa).

Met-1 carries the N-acetylmethionine modification. Residues Ser-47, Ser-49, Ser-60, and Ser-63 each carry the phosphoserine modification. Residues 88–161 enclose the J domain; the sequence is DHYAVLGLGH…VKRRAFNSVD (74 aa). The tract at residues 160-250 is ZRF1-UBD; that stretch reads VDPTFDNSVP…RDERRWIEKQ (91 aa). Ser-183 is modified (phosphoserine). Disordered stretches follow at residues 294–315 and 426–453; these read EKKAKADAKRKEQEAKEKQRQA and KEEAEARMRQASKNAEKSAGGGGNGSKH. 2 consecutive SANT domains span residues 449–511 and 549–604; these read NGSK…KLDP and TDFT…EMVK.

As to quaternary structure, component of ribosome-associated complex (RAC), a heterodimer composed of Hsp70/DnaK-type chaperone HSPA14 and Hsp40/DnaJ-type chaperone DNAJC2. Interacts (via ZRF1-UBD region) with ID1. In terms of processing, phosphorylated in M (mitotic) phase.

It localises to the nucleus. The protein localises to the cytoplasm. It is found in the cytosol. Its function is as follows. Acts both as a chaperone in the cytosol and as a chromatin regulator in the nucleus. When cytosolic, acts as a molecular chaperone: component of the ribosome-associated complex (RAC), a complex involved in folding or maintaining nascent polypeptides in a folding-competent state. In the RAC complex, stimulates the ATPase activity of the ribosome-associated pool of Hsp70-type chaperones HSPA14 that bind to the nascent polypeptide chain. When nuclear, mediates the switching from polycomb-repressed genes to an active state: specifically recruited at histone H2A ubiquitinated at 'Lys-119' (H2AK119ub), and promotes the displacement of the polycomb PRC1 complex from chromatin, thereby facilitating transcription activation. The sequence is that of DnaJ homolog subfamily C member 2 (DNAJC2) from Bos taurus (Bovine).